The sequence spans 64 residues: uncharacterized protein (64 aa).

Residues 41-61 form a helical membrane-spanning segment; sequence VFLALKVLGIMVLFYLLDAII.

It is found in the membrane. This is an uncharacterized protein from Acheta domesticus (House cricket).